The chain runs to 560 residues: Involucrin (560 aa).

Residues 1-15 (MSQQHTLPVTLSPAL) show a composition bias toward polar residues. Disordered stretches follow at residues 1-131 (MSQQ…KLLD), 150-359 (EQLL…LVQQ), and 404-534 (GQLK…QSAL). Positions 76-91 (EQQQQEPQEQELQQQH) are enriched in low complexity. Basic and acidic residues-rich tracts occupy residues 92 to 115 (WEQH…KAQR) and 159 to 172 (QEGH…REGQ). Residues 189–211 (QKGQLELPEQQEGQLELPEQQEG) show a composition bias toward low complexity. Basic and acidic residues-rich tracts occupy residues 212–231 (QLKH…HQEG), 252–264 (QLKH…KQPE), and 274–320 (KHLE…EHQE). A compositionally biased stretch (low complexity) spans 321 to 334 (GQLGLPEQQVQQLK). Basic and acidic residues-rich tracts occupy residues 335–353 (QLEK…EGQL), 404–420 (GQLK…KHLE), 454–463 (QLKHLEKQEA), 476–486 (KHLEQQEKQLE), and 494–510 (QLKH…DLEQ).

Belongs to the involucrin family. Directly or indirectly cross-linked to cornifelin (CNFN). In terms of processing, substrate of transglutaminase. Specific glutamines or lysines are cross-linked to keratins, desmoplakin and to inter involucrin molecules. In terms of tissue distribution, keratinocytes of epidermis and other stratified squamous epithelia.

The protein resides in the cytoplasm. Functionally, part of the insoluble cornified cell envelope (CE) of stratified squamous epithelia. In Pan paniscus (Pygmy chimpanzee), this protein is Involucrin (IVL).